We begin with the raw amino-acid sequence, 418 residues long: Phosphatidylcholine:ceramide cholinephosphotransferase 1 (418 aa).

The SAM domain maps to 12–75 (WSPKKVADWL…LDMIETLKME (64 aa)). Phosphoserine is present on Ser13. 5 consecutive transmembrane segments (helical) span residues 141–161 (FLAF…ISVV), 189–209 (FSIC…QWLL), 220–240 (FFCI…VTTL), 281–301 (MCGD…YLFI), and 309–329 (LWWY…CILL). His290 is a catalytic residue. Catalysis depends on residues His333 and Asp337. The chain crosses the membrane as a helical span at residues 335-352 (TVDVVVAYYITTRLFWWY).

The protein belongs to the sphingomyelin synthase family. Widely expressed. Highest expression in the cardiovascular system.

It localises to the golgi apparatus membrane. It catalyses the reaction an N-acylsphing-4-enine + a 1,2-diacyl-sn-glycero-3-phosphocholine = a sphingomyelin + a 1,2-diacyl-sn-glycerol. The enzyme catalyses 1-(9Z-octadecenoyl)-2-acyl-sn-3-glycerol + a sphingomyelin = a 1-(9Z-octadecenoyl)-2-acyl-sn-glycero-3-phosphocholine + an N-acylsphing-4-enine. It carries out the reaction N-hexadecanoylsphinganine + a 1,2-diacyl-sn-glycero-3-phosphocholine = N-hexadecanoyl-sphinganine-1-phosphocholine + a 1,2-diacyl-sn-glycerol. The catalysed reaction is N-hexadecanoyl-(4R)-hydroxysphinganine + a 1,2-diacyl-sn-glycero-3-phosphocholine = N-hexadecanoyl-(4R)-hydroxysphinganine-phosphocholine + a 1,2-diacyl-sn-glycerol. It catalyses the reaction an N-acylsphing-4-enine + a 1,2-diacyl-sn-glycero-3-phosphoethanolamine = an N-acylsphing-4-enine 1-phosphoethanolamine + a 1,2-diacyl-sn-glycerol. It participates in sphingolipid metabolism. Its function is as follows. Major sphingomyelin synthase at the Golgi apparatus. Catalyzes the reversible transfer of phosphocholine moiety in sphingomyelin biosynthesis: in the forward reaction transfers phosphocholine head group of phosphatidylcholine (PC) on to ceramide (CER) to form ceramide phosphocholine (sphingomyelin, SM) and diacylglycerol (DAG) as by-product, and in the reverse reaction transfers phosphocholine from SM to DAG to form PC and CER. The direction of the reaction depends on the levels of CER and DAG in Golgi membranes. Converts the newly synthesized CER, that is transported from the endoplasmic reticulum to the trans-Golgi by the Cer transport protein (CERT), to SM. Can form a heteromeric complex with glucosylceramide synthase (GCS) increasing SMS activity and reducing glucosylceramide synthesis, a critical mechanism that controls the metabolic fate of CER in the Golgi. Does not use free phosphorylcholine or CDP-choline as donor. Can also transfer phosphoethanolamine head group of phosphatidylethanolamine (PE) on to CER to form ceramide phosphoethanolamine (CPE). Regulates receptor-mediated signal transduction via mitogenic DAG and proapoptotic CER, as well as via SM, a structural component of membrane rafts that serve as platforms for signal transduction and protein sorting. Plays a role in secretory transport via regulation of DAG pool at the Golgi apparatus and its downstream effects on PRKD1. This chain is Phosphatidylcholine:ceramide cholinephosphotransferase 1 (SGMS1), found in Sus scrofa (Pig).